Reading from the N-terminus, the 117-residue chain is Large ribosomal subunit protein uL18 (117 aa).

This sequence belongs to the universal ribosomal protein uL18 family. In terms of assembly, part of the 50S ribosomal subunit; part of the 5S rRNA/L5/L18/L25 subcomplex. Contacts the 5S and 23S rRNAs.

Functionally, this is one of the proteins that bind and probably mediate the attachment of the 5S RNA into the large ribosomal subunit, where it forms part of the central protuberance. This Thioalkalivibrio sulfidiphilus (strain HL-EbGR7) protein is Large ribosomal subunit protein uL18.